Here is a 126-residue protein sequence, read N- to C-terminus: Holo-[acyl-carrier-protein] synthase (126 aa).

Positions 9 and 58 each coordinate Mg(2+).

This sequence belongs to the P-Pant transferase superfamily. AcpS family. It depends on Mg(2+) as a cofactor.

The protein resides in the cytoplasm. The enzyme catalyses apo-[ACP] + CoA = holo-[ACP] + adenosine 3',5'-bisphosphate + H(+). Transfers the 4'-phosphopantetheine moiety from coenzyme A to a Ser of acyl-carrier-protein. This chain is Holo-[acyl-carrier-protein] synthase, found in Yersinia pestis bv. Antiqua (strain Angola).